The sequence spans 238 residues: Protein G1-like8 (238 aa).

Disordered regions lie at residues 1–33 (MEGG…RYES) and 147–238 (KARG…ATRV). Over residues 10–27 (GQAQPVAQAPPAMQPMQQ) the composition is skewed to low complexity. The ALOG domain occupies 30 to 157 (RYESQKRRDW…ARGIPYEKKK (128 aa)). The Nuclear localization signal motif lies at 155-159 (KKKRK). Over residues 165 to 176 (QPPPPPPPPPQH) the composition is skewed to pro residues. Composition is skewed to low complexity over residues 177 to 213 (QPGA…ATSQ) and 222 to 238 (TTTT…ATRV).

The protein belongs to the plant homeotic and developmental regulators ALOG protein family.

It localises to the nucleus. Functionally, probable transcription regulator that acts as a developmental regulator by promoting cell growth in response to light. In Oryza sativa subsp. japonica (Rice), this protein is Protein G1-like8 (G1L8).